We begin with the raw amino-acid sequence, 358 residues long: MQTTHSNPSSPSLTLGIETSCDETGIALYHSEKGLIAHTLYSQIKLHAEYGGVVPELASRDHIRKITPLIQETLKKGQVSAKDITGIAYTAGPGLMGALLSGASVARSLAFAWQIPAIAIHHMEGHLLAPMLEETQPEFPFVCLLVSGGHTMIIRVDGIGRYKLLGDTLDDAAGEAFDKTAKMLGLGYPGGPEVSKLALHGQTDRYKFPRPMVDRPGLDMSFSGLKTFTLNTWLKAKESGDDSEQTKADICRAFEVAVADTLSIKCKRALEQEGLNRLVVSGGVSANREIRAKLDALMAKRKGSAFYPRLEFCTDNGAMIAYAGSKRLEAGQFSDLNFACQPRWDLESLEPIDPIEVV.

Fe cation-binding residues include histidine 122 and histidine 126. Substrate contacts are provided by residues 145 to 149 (LVSGG), aspartate 178, glycine 191, and asparagine 287. A Fe cation-binding site is contributed by aspartate 315.

The protein belongs to the KAE1 / TsaD family. Fe(2+) is required as a cofactor.

The protein localises to the cytoplasm. The enzyme catalyses L-threonylcarbamoyladenylate + adenosine(37) in tRNA = N(6)-L-threonylcarbamoyladenosine(37) in tRNA + AMP + H(+). Functionally, required for the formation of a threonylcarbamoyl group on adenosine at position 37 (t(6)A37) in tRNAs that read codons beginning with adenine. Is involved in the transfer of the threonylcarbamoyl moiety of threonylcarbamoyl-AMP (TC-AMP) to the N6 group of A37, together with TsaE and TsaB. TsaD likely plays a direct catalytic role in this reaction. The polypeptide is tRNA N6-adenosine threonylcarbamoyltransferase (Hydrogenovibrio crunogenus (strain DSM 25203 / XCL-2) (Thiomicrospira crunogena)).